The sequence spans 458 residues: UDP-N-acetylglucosamine 1-carboxyvinyltransferase (458 aa).

Phosphoenolpyruvate is bound at residue 34-35; the sequence is KN. Residue Arg104 coordinates UDP-N-acetyl-alpha-D-glucosamine. The active-site Proton donor is the Cys128. Cys128 carries the post-translational modification 2-(S-cysteinyl)pyruvic acid O-phosphothioketal. The UDP-N-acetyl-alpha-D-glucosamine site is built by Asp319 and Ile341.

Belongs to the EPSP synthase family. MurA subfamily.

The protein resides in the cytoplasm. The catalysed reaction is phosphoenolpyruvate + UDP-N-acetyl-alpha-D-glucosamine = UDP-N-acetyl-3-O-(1-carboxyvinyl)-alpha-D-glucosamine + phosphate. The protein operates within cell wall biogenesis; peptidoglycan biosynthesis. Cell wall formation. Adds enolpyruvyl to UDP-N-acetylglucosamine. The chain is UDP-N-acetylglucosamine 1-carboxyvinyltransferase from Prochlorococcus marinus (strain MIT 9515).